The following is a 148-amino-acid chain: Hydrogenase expression/formation protein HoxO (148 aa).

The segment at 128–148 is disordered; it reads IPVLSPESGTPSCSPMETSES. Over residues 134–148 the composition is skewed to polar residues; the sequence is ESGTPSCSPMETSES.

It belongs to the HupG/HyaE family.

The protein is Hydrogenase expression/formation protein HoxO (hoxO) of Azotobacter vinelandii.